An 896-amino-acid chain; its full sequence is Bifunctional glutamine synthetase adenylyltransferase/adenylyl-removing enzyme (896 aa).

The tract at residues Met-1–Glu-411 is adenylyl removase. An adenylyl transferase region spans residues Asn-417 to Ala-896.

This sequence belongs to the GlnE family. It depends on Mg(2+) as a cofactor.

The enzyme catalyses [glutamine synthetase]-O(4)-(5'-adenylyl)-L-tyrosine + phosphate = [glutamine synthetase]-L-tyrosine + ADP. It catalyses the reaction [glutamine synthetase]-L-tyrosine + ATP = [glutamine synthetase]-O(4)-(5'-adenylyl)-L-tyrosine + diphosphate. In terms of biological role, involved in the regulation of glutamine synthetase GlnA, a key enzyme in the process to assimilate ammonia. When cellular nitrogen levels are high, the C-terminal adenylyl transferase (AT) inactivates GlnA by covalent transfer of an adenylyl group from ATP to specific tyrosine residue of GlnA, thus reducing its activity. Conversely, when nitrogen levels are low, the N-terminal adenylyl removase (AR) activates GlnA by removing the adenylyl group by phosphorolysis, increasing its activity. The regulatory region of GlnE binds the signal transduction protein PII (GlnB) which indicates the nitrogen status of the cell. The sequence is that of Bifunctional glutamine synthetase adenylyltransferase/adenylyl-removing enzyme from Neisseria meningitidis serogroup A / serotype 4A (strain DSM 15465 / Z2491).